We begin with the raw amino-acid sequence, 1364 residues long: Formin-like protein 6 (1364 aa).

Residues 9–193 enclose the Phosphatase tensin-type domain; sequence YRKPPDGLLE…HYISRRNVSA (185 aa). Cys-126 serves as the catalytic Phosphocysteine intermediate. One can recognise a C2 tensin-type domain in the interval 199 to 338; sequence DRALTLDCVI…FRAEVLFSEM (140 aa). Disordered regions lie at residues 614–934, 976–999, and 1317–1364; these read KCTP…NLKP, VLPS…KPEK, and EAEA…ASAK. Residues 617-631 show a composition bias toward pro residues; the sequence is PSPPPLLPPLAPVVP. Positions 657-690 are enriched in polar residues; sequence SFPSLSPTQQKQSTSKLCQTILPTNHQLSSSNIT. Residues 734 to 743 show a composition bias toward pro residues; that stretch reads PPAPPPPPLQ. Over residues 744–757 the composition is skewed to low complexity; that stretch reads SPSTPRCSPVRTLA. Pro residues-rich tracts occupy residues 774-813 and 856-865; these read GPPP…PAAP and PSPPPPPPPC. A compositionally biased stretch (polar residues) spans 916–929; the sequence is MSRSLQSGQAASRR. The FH2 domain occupies 922 to 1322; sequence SGQAASRRSN…KALKEAEAEK (401 aa). Residues 1317 to 1351 are compositionally biased toward basic and acidic residues; it reads EAEAEKTKKEPENAQKTKEPGNDKAKHNNSIKELD. Over residues 1353–1364 the composition is skewed to polar residues; it reads SLQSPAQTASAK.

It belongs to the formin-like family. Class-II subfamily.

This Oryza sativa subsp. japonica (Rice) protein is Formin-like protein 6 (FH6).